A 189-amino-acid chain; its full sequence is MKIGLMGGTFDPPHIGHLLIAEQAKEQLQLDAVWFLPAKLPPHKQSTVTSAAKRLELVRAAVRDNQDFSVSEIEFERETKSYTFDTIRELKRRYPEHAFFFLIGADSLVSLGTWHRSEKLYKEIEFGAVARPGSRYLIPEGARVTAVDMPLLEVSSTDIRQRVARGRSIRYLVPEPVRQLIEEWNLYAT.

Belongs to the NadD family.

The enzyme catalyses nicotinate beta-D-ribonucleotide + ATP + H(+) = deamido-NAD(+) + diphosphate. It functions in the pathway cofactor biosynthesis; NAD(+) biosynthesis; deamido-NAD(+) from nicotinate D-ribonucleotide: step 1/1. Its function is as follows. Catalyzes the reversible adenylation of nicotinate mononucleotide (NaMN) to nicotinic acid adenine dinucleotide (NaAD). This is Probable nicotinate-nucleotide adenylyltransferase from Exiguobacterium sibiricum (strain DSM 17290 / CCUG 55495 / CIP 109462 / JCM 13490 / 255-15).